Here is a 391-residue protein sequence, read N- to C-terminus: Phosphoglycerate kinase (391 aa).

Substrate is bound by residues 21–23, arginine 36, 59–62, arginine 113, and arginine 146; these read DLN and HLGR. ATP contacts are provided by residues lysine 197, glutamate 319, and 345 to 348; that span reads GGDT.

The protein belongs to the phosphoglycerate kinase family. As to quaternary structure, monomer.

It is found in the cytoplasm. The catalysed reaction is (2R)-3-phosphoglycerate + ATP = (2R)-3-phospho-glyceroyl phosphate + ADP. It functions in the pathway carbohydrate degradation; glycolysis; pyruvate from D-glyceraldehyde 3-phosphate: step 2/5. This is Phosphoglycerate kinase from Shewanella baltica (strain OS185).